A 366-amino-acid polypeptide reads, in one-letter code: Tripartite motif-containing protein 54 (366 aa).

The RING-type zinc-finger motif lies at 26-82 (CPICLEMFSKPVVILPCQHNLCRKCANDVFQASNPLWQSRSSTTVSSGGRFRCPSCR). The segment at 121–163 (EQHLMCEEHEDEKINIYCLSCEVPTCSLCKVFGAHKDCEVAPL) adopts a B box-type zinc-finger fold. Positions 126, 129, 149, and 155 each coordinate Zn(2+). A mediates microtubule-binding and homooligomerization region spans residues 168 to 211 (KRQKSELSDGIAMLVAGNDRVQAVITQMEEVCQTIEENSRRQKQ). Positions 185 to 258 (NDRVQAVITQ…LIRQYGDHLE (74 aa)) form a coiled coil. In terms of domain architecture, COS spans 271-329 (MEEPQMALYLQQAKELINKVGTMSKVELAGRPEPGYERMDQFTVSVEHVAEMLRTIDFQ). A disordered region spans residues 326 to 366 (IDFQPGTSGEEEDEEVAVEGEEGNAGPEEERTDGRESTGQH). Positions 334 to 347 (GEEEDEEVAVEGEE) are enriched in acidic residues. The segment covering 353–366 (EEERTDGRESTGQH) has biased composition (basic and acidic residues).

Homooligomer and heterooligomer. Interacts with TRIM63 and probably with TRIM55. Interacts with tubulin.

The protein resides in the cytoplasm. Its subcellular location is the cytoskeleton. It localises to the myofibril. The protein localises to the sarcomere. It is found in the z line. May bind and stabilize microtubules during myotubes formation. In Bos taurus (Bovine), this protein is Tripartite motif-containing protein 54 (TRIM54).